Reading from the N-terminus, the 928-residue chain is Probable outer membrane protein pmp10 (928 aa).

The signal sequence occupies residues 1-25 (MKSQFSWLVLSSTLACFTSCSTVFA). The Autotransporter domain maps to 635–928 (TLCSDRGFWA…NVDLGGKFQF (294 aa)).

This sequence belongs to the PMP outer membrane protein family.

Its subcellular location is the secreted. The protein resides in the cell wall. It is found in the cell outer membrane. This is Probable outer membrane protein pmp10 (pmp10) from Chlamydia pneumoniae (Chlamydophila pneumoniae).